The chain runs to 822 residues: Microcephalin (822 aa).

One can recognise a BRCT 1 domain in the interval Ala-10–Ala-99. 3 disordered regions span residues Met-182–Asn-203, Pro-219–Arg-243, and Ser-266–Asn-295. 2 stretches are compositionally biased toward polar residues: residues Leu-189–Asn-203 and Pro-219–Gly-235. Phosphoserine is present on residues Ser-273, Ser-290, and Ser-327. Residue Thr-329 is modified to Phosphothreonine. Disordered stretches follow at residues Glu-335–Arg-366, Asn-498–Asp-567, and Thr-594–Thr-636. Over residues His-522 to Thr-541 the composition is skewed to polar residues. Basic and acidic residues-rich tracts occupy residues Glu-542–Pro-553 and Lys-625–Thr-634. BRCT domains lie at Ser-627–Leu-717 and Tyr-738–Leu-820.

Interacts with CDC27 and maybe other components of the APC/C complex. Interacts with histone variant H2AX under DNA damage conditions. As to expression, high levels of expression are found in the developing forebrain and, in particular, in the walls of the lateral ventricles.

The protein resides in the cytoplasm. The protein localises to the cytoskeleton. It is found in the microtubule organizing center. It localises to the centrosome. Implicated in chromosome condensation and DNA damage induced cellular responses. May play a role in neurogenesis and regulation of the size of the cerebral cortex. The sequence is that of Microcephalin from Mus musculus (Mouse).